Here is a 269-residue protein sequence, read N- to C-terminus: Autophagy-related protein 27 (269 aa).

The signal sequence occupies residues 1–17 (MWAIAGLISVLLAQAAA). In terms of domain architecture, MRH spans 18–175 (FDCSAKELEH…SMYSKAACIT (158 aa)). The Lumenal portion of the chain corresponds to 18 to 193 (FDCSAKELEH…PPKKPDNGES (176 aa)). Cystine bridges form between cysteine 20/cysteine 59, cysteine 69/cysteine 76, and cysteine 141/cysteine 173. The helical transmembrane segment at 194-214 (WGWFTWIFIFLVLFLSIYIVG) threads the bilayer. Residues 215–269 (GAWFQYNKGNAIDFSSALREVLDNFVELLKGIPAFSREIIEKFTSNSNRGEYSAV) lie on the Cytoplasmic side of the membrane.

Belongs to the ATG27 family.

The protein localises to the cytoplasmic vesicle membrane. It is found in the golgi apparatus membrane. Its subcellular location is the mitochondrion membrane. It localises to the preautophagosomal structure membrane. In terms of biological role, effector of VPS34 phosphatidylinositol 3-phosphate kinase signaling. Regulates the cytoplasm to vacuole transport (Cvt) vesicle formation. Plays a role in ATG protein retrieval from the pre-autophagosomal structure (PAS) and is especially required for autophagy-dependent cycling of ATG9. The chain is Autophagy-related protein 27 (ATG27) from Scheffersomyces stipitis (strain ATCC 58785 / CBS 6054 / NBRC 10063 / NRRL Y-11545) (Yeast).